Consider the following 110-residue polypeptide: MVHIIPKTQRDIMLLIRSHVIMQKSFILHLTFLWSLYTLMTIQGTFIYIPVFAGANVKENICDLHCRWQCGTRLMVKYTFHHRHRWPESKAPMNTFKEQISTIMHLVTDC.

The protein is Probable protein L3 of Human papillomavirus type 5b.